The following is a 948-amino-acid chain: Receptor-like protein 45 (948 aa).

The signal sequence occupies residues 1 to 26; that stretch reads MSSSKLMDFGLTWIIMMMILLQGCRS. At 27 to 897 the chain is on the extracellular side; it reads CIESERQGLL…EDDDESGLLD (871 aa). N-linked (GlcNAc...) asparagine glycosylation is found at Asn99 and Asn113. LRR repeat units follow at residues 106–129 and 135–162; these read FEEL…RKGG and LRNL…AVSL. Residues 163–183 form an LRR 3; degenerate repeat; it reads KTLILHDNLFKGGFPVQELIN. Asn183 is a glycosylation site (N-linked (GlcNAc...) asparagine). LRR repeat units follow at residues 184 to 208, 210 to 233, 234 to 257, 258 to 284, 286 to 306, 307 to 332, 334 to 357, 358 to 381, 382 to 404, 405 to 429, 430 to 453, 454 to 477, 479 to 502, 503 to 526, 527 to 549, 550 to 573, 575 to 595, 596 to 618, 619 to 640, 642 to 665, 666 to 689, 758 to 782, 783 to 805, 807 to 831, and 833 to 855; these read LTSL…ELTN, RNLR…GICR, LEQL…CFSR, FSKL…DFKS, EYLS…LITE, LTEL…VSGG, QSQL…LWYQ, QELR…LLEN, NTEL…PRTM, RRLQ…GLIL, ASLR…MARM, ENIE…LFTG, YSLS…SSDE, TSLI…LLNL, RMLS…WLGN, FFLE…LFNI, YLWL…LRSS, SDYG…DTLW, YGLR…LFRS, PSIS…LCGL, SNVR…VTNL, LNQM…LGDL, KRVR…SFSN, RSIE…TLLQ, and LVVF…QFNT. N-linked (GlcNAc...) asparagine glycosylation is present at Asn328. N-linked (GlcNAc...) asparagine glycosylation is found at Asn381 and Asn392. 2 N-linked (GlcNAc...) asparagine glycosylation sites follow: Asn436 and Asn465. A glycan (N-linked (GlcNAc...) asparagine) is linked at Asn608. Asn653, Asn679, and Asn688 each carry an N-linked (GlcNAc...) asparagine glycan. Asn789 carries N-linked (GlcNAc...) asparagine glycosylation. Asn837 and Asn842 each carry an N-linked (GlcNAc...) asparagine glycan. A helical transmembrane segment spans residues 898 to 918; it reads IVVLWWSLGTTYVTVMMGFLV. The Cytoplasmic portion of the chain corresponds to 919–948; sequence FLCFDSPWRRAWFCLVDTFIDRVKDVLGVI.

Belongs to the RLP family.

Its subcellular location is the cell membrane. The chain is Receptor-like protein 45 from Arabidopsis thaliana (Mouse-ear cress).